A 670-amino-acid polypeptide reads, in one-letter code: Transcription factor 4 (670 aa).

The essential for MYOD1 inhibition stretch occupies residues 1 to 83; the sequence is MHHQQRMAAL…GTPYDHMTSR (83 aa). Disordered stretches follow at residues 24-244, 262-320, 335-378, 406-426, 465-573, and 637-670; these read AMFS…LGNS, LSYP…SQTG, HTNN…EGPL, PSTA…PSHN, SLLP…MANN, and KRRE…MGQM. Residues 29-49 are compositionally biased toward polar residues; sequence PVSSGKNGPTSLASGHFTGSN. A phosphoserine mark is found at Ser-66, Ser-87, and Ser-92. Composition is skewed to polar residues over residues 107–125, 136–154, 205–215, and 265–305; these read GSYS…QQSL, GTLS…SSNN, PAASTFPSSFF, and PSHS…TDSI. The segment covering 336 to 347 has biased composition (low complexity); sequence TNNSFSSNPSTP. Positions 364–373 are enriched in polar residues; sequence NGGQASSSPN. Ser-371 carries the post-translational modification Phosphoserine. The segment at 378–399 is leucine-zipper; the sequence is LHSLQSRIEDRLERLDDAIHVL. Composition is skewed to low complexity over residues 466 to 479 and 502 to 511; these read LLPN…LPVQ and GQSVSSGSSE. Residue Ser-514 is modified to Phosphoserine. 2 stretches are compositionally biased toward basic and acidic residues: residues 526-542 and 558-573; these read KSSE…DIKS and PEQK…MANN. In terms of domain architecture, bHLH spans 567-620; sequence ERRMANNARERLRVRDINEAFKELGRMVQLHLKSDKPQTKLLILHQAVAVILSL. The interval 622–645 is class A specific domain; the sequence is QQVRERNLNPKAACLKRREEEKVS.

In terms of assembly, efficient DNA binding requires dimerization with another bHLH protein. Isoform 2 seems to form inactive heterodimers with MYOD1. Interacts with HIVEP2. Interacts with NEUROD2. Interacts with AGBL1. Interacts with BHLHA9. In terms of tissue distribution, expressed in the cerebral cortex, Purkinje and granule cell layers of the cerebellum, olfactory neuroepithelium, pyramidal cells of hippocampal layers CA1-CA4, and in the granular cells of the dentate gyrus.

It localises to the nucleus. In terms of biological role, transcription factor that binds to the immunoglobulin enhancer Mu-E5/KE5-motif. Involved in the initiation of neuronal differentiation. Activates transcription by binding to the E box (5'-CANNTG-3'). Isoform 2 inhibits MYOD1 activation of the cardiac alpha-actin promoter. Binds to the E-box present in the somatostatin receptor 2 initiator element (SSTR2-INR) to activate transcription. May have a regulatory function in developmental processes as well as during neuronal plasticity. This chain is Transcription factor 4 (Tcf4), found in Mus musculus (Mouse).